The sequence spans 746 residues: Exostosin-1 (746 aa).

Residues 1–7 (MQAKKRY) lie on the Cytoplasmic side of the membrane. A helical; Signal-anchor for type II membrane protein membrane pass occupies residues 8 to 28 (FILLSAGSCLALLFYFGGLQF). At 29–746 (RASRSHSRRE…RKKYRDIERL (718 aa)) the chain is on the lumenal side. The N-linked (GlcNAc...) asparagine glycan is linked to asparagine 89. Cystine bridges form between cysteine 98–cysteine 103 and cysteine 109–cysteine 152. Positions 166 and 203 each coordinate a protein. Positions 267, 269, 271, and 280 each coordinate UDP. An intrachain disulfide couples cysteine 298 to cysteine 312. Residue histidine 300 coordinates a protein. Residues tyrosine 319 and tyrosine 324 each coordinate UDP. Asparagine 330 carries an N-linked (GlcNAc...) asparagine glycan. Intrachain disulfides connect cysteine 334–cysteine 355 and cysteine 652–cysteine 704. Residues arginine 346 and glutamate 349 each coordinate UDP.

The protein belongs to the glycosyltransferase 47 family. In terms of assembly, part of the heparan sulfate polymerase, a dimeric complex composed of EXT1 and EXT2. Could also form homooligomeric complexes. Interacts with NDST1. N-glycosylated.

It localises to the golgi apparatus membrane. The protein localises to the golgi apparatus. Its subcellular location is the cis-Golgi network membrane. The protein resides in the endoplasmic reticulum membrane. It catalyses the reaction 3-O-{alpha-D-GlcNAc-[(1-&gt;4)-beta-D-GlcA-(1-&gt;4)-alpha-D-GlcNAc](n)-(1-&gt;4)-beta-D-GlcA-(1-&gt;3)-beta-D-Gal-(1-&gt;3)-beta-D-Gal-(1-&gt;4)-beta-D-Xyl}-L-seryl-[protein] + UDP-alpha-D-glucuronate = 3-O-{[(1-&gt;4)-beta-D-GlcA-(1-&gt;4)-alpha-D-GlcNAc](n+1)-(1-&gt;4)-beta-D-GlcA-(1-&gt;3)-beta-D-Gal-(1-&gt;3)-beta-D-Gal-(1-&gt;4)-beta-D-Xyl}-L-seryl-[protein] + UDP + H(+). Its pathway is protein modification; protein glycosylation. In terms of biological role, glycosyltransferase forming with EXT2 the heterodimeric heparan sulfate polymerase which catalyzes the elongation of the heparan sulfate glycan backbone. Glycan backbone extension consists in the alternating transfer of (1-&gt;4)-beta-D-GlcA and (1-&gt;4)-alpha-D-GlcNAc residues from their respective UDP-sugar donors. Both EXT1 and EXT2 are required for the full activity of the polymerase since EXT1 bears the N-acetylglucosaminyl-proteoglycan 4-beta-glucuronosyltransferase activity within the complex while EXT2 carries the glucuronosyl-N-acetylglucosaminyl-proteoglycan 4-alpha-N-acetylglucosaminyltransferase activity. Heparan sulfate proteoglycans are ubiquitous components of the extracellular matrix and play an important role in tissue homeostasis and signaling. The chain is Exostosin-1 (EXT1) from Pongo abelii (Sumatran orangutan).